Reading from the N-terminus, the 814-residue chain is DNA ligase (814 aa).

NAD(+)-binding positions include 46-50 (DAEYD), 95-96 (SL), and Glu129. The N6-AMP-lysine intermediate role is filled by Lys131. Residues Arg152, Glu189, Lys305, and Lys329 each contribute to the NAD(+) site. Positions 434, 437, 458, and 464 each coordinate Zn(2+). Residues 526–549 (SAQRRTEGEPAPKKPTKKKGEEED) form a disordered region. In terms of domain architecture, BRCT spans 735–814 (TSAAAFAGKT…DDWLAMLAEA (80 aa)).

The protein belongs to the NAD-dependent DNA ligase family. LigA subfamily. Mg(2+) is required as a cofactor. Requires Mn(2+) as cofactor.

It carries out the reaction NAD(+) + (deoxyribonucleotide)n-3'-hydroxyl + 5'-phospho-(deoxyribonucleotide)m = (deoxyribonucleotide)n+m + AMP + beta-nicotinamide D-nucleotide.. In terms of biological role, DNA ligase that catalyzes the formation of phosphodiester linkages between 5'-phosphoryl and 3'-hydroxyl groups in double-stranded DNA using NAD as a coenzyme and as the energy source for the reaction. It is essential for DNA replication and repair of damaged DNA. The polypeptide is DNA ligase (Methylorubrum extorquens (strain CM4 / NCIMB 13688) (Methylobacterium extorquens)).